The primary structure comprises 289 residues: (+)-kolavelool synthase (289 aa).

It belongs to the diterpene synthase family.

The enzyme catalyses (+)-kolavenyl diphosphate + H2O = (+)-kolavelool + diphosphate. Involved in the biosynthesis of (+)-O-methylkolavelool. Catalyzes the biosynthesis of (+)-kolavelool from (+)-kolavenyl diphosphate via the release of the diphosphate moiety through the nucleophilic addition of a water molecule. This chain is (+)-kolavelool synthase, found in Herpetosiphon aurantiacus (strain ATCC 23779 / DSM 785 / 114-95).